The sequence spans 603 residues: Elongation factor 4 (603 aa).

The region spanning 2 to 184 (NHIRNFSIIA…AVIARVPPPK (183 aa)) is the tr-type G domain. GTP contacts are provided by residues 14-19 (DHGKST) and 131-134 (NKMD).

The protein belongs to the TRAFAC class translation factor GTPase superfamily. Classic translation factor GTPase family. LepA subfamily.

The protein resides in the cell inner membrane. It catalyses the reaction GTP + H2O = GDP + phosphate + H(+). In terms of biological role, required for accurate and efficient protein synthesis under certain stress conditions. May act as a fidelity factor of the translation reaction, by catalyzing a one-codon backward translocation of tRNAs on improperly translocated ribosomes. Back-translocation proceeds from a post-translocation (POST) complex to a pre-translocation (PRE) complex, thus giving elongation factor G a second chance to translocate the tRNAs correctly. Binds to ribosomes in a GTP-dependent manner. This chain is Elongation factor 4, found in Polaromonas sp. (strain JS666 / ATCC BAA-500).